A 250-amino-acid chain; its full sequence is Triosephosphate isomerase (250 aa).

9-11 (NWK) provides a ligand contact to substrate. The Electrophile role is filled by His-96. The active-site Proton acceptor is Glu-168. Residues Gly-174, Ser-216, and 237 to 238 (GG) contribute to the substrate site.

The protein belongs to the triosephosphate isomerase family. As to quaternary structure, homodimer.

It localises to the cytoplasm. The catalysed reaction is D-glyceraldehyde 3-phosphate = dihydroxyacetone phosphate. Its pathway is carbohydrate biosynthesis; gluconeogenesis. It functions in the pathway carbohydrate degradation; glycolysis; D-glyceraldehyde 3-phosphate from glycerone phosphate: step 1/1. Its function is as follows. Involved in the gluconeogenesis. Catalyzes stereospecifically the conversion of dihydroxyacetone phosphate (DHAP) to D-glyceraldehyde-3-phosphate (G3P). The chain is Triosephosphate isomerase from Leptospira interrogans serogroup Icterohaemorrhagiae serovar Lai (strain 56601).